The sequence spans 20 residues: uncharacterized protein (20 aa).

This is an uncharacterized protein from Serratia marcescens.